A 184-amino-acid polypeptide reads, in one-letter code: ATP-dependent protease subunit HslV (184 aa).

Thr12 is a catalytic residue. 3 residues coordinate Na(+): Ala166, Cys169, and Thr172.

It belongs to the peptidase T1B family. HslV subfamily. A double ring-shaped homohexamer of HslV is capped on each side by a ring-shaped HslU homohexamer. The assembly of the HslU/HslV complex is dependent on binding of ATP.

It localises to the cytoplasm. It catalyses the reaction ATP-dependent cleavage of peptide bonds with broad specificity.. Allosterically activated by HslU binding. In terms of biological role, protease subunit of a proteasome-like degradation complex believed to be a general protein degrading machinery. This is ATP-dependent protease subunit HslV from Brucella melitensis biotype 1 (strain ATCC 23456 / CCUG 17765 / NCTC 10094 / 16M).